The following is a 406-amino-acid chain: Heparan sulfate glucosamine 3-O-sulfotransferase 3A1 (406 aa).

Over 1-24 (MAPPGPASALSTSAEPLSRSIFRK) the chain is Cytoplasmic. The helical; Signal-anchor for type II membrane protein transmembrane segment at 25–43 (FLLMLCSLLTSLYVFYCLA) threads the bilayer. At 44 to 406 (ERCQTLSGPV…MTGHDFGWDG (363 aa)) the chain is on the lumenal side. Over residues 92–102 (QLPQWRRRRPP) the composition is skewed to basic residues. The interval 92 to 134 (QLPQWRRRRPPAPRDDGEEAAWEEESPGLSGGPGGSGAGSTVA) is disordered. Acidic residues predominate over residues 107–117 (DGEEAAWEEES). Gly residues predominate over residues 120-129 (LSGGPGGSGA). Residue 162-166 (KGGTR) participates in 3'-phosphoadenylyl sulfate binding. Substrate contacts are provided by residues arginine 166, 184-190 (EPHFFDR), and 215-218 (KTPS). 2 residues coordinate 3'-phosphoadenylyl sulfate: arginine 243 and serine 251. Residue 255-259 (QTLSK) participates in substrate binding. Asparagine 273 carries an N-linked (GlcNAc...) asparagine glycan. 283–284 (WS) serves as a coordination point for substrate. N-linked (GlcNAc...) asparagine glycosylation occurs at asparagine 344. A disulfide bridge connects residues cysteine 351 and cysteine 363. 367-370 (TKGR) serves as a coordination point for substrate. Position 368-372 (368-372 (KGRTH)) interacts with 3'-phosphoadenylyl sulfate.

The protein belongs to the sulfotransferase 1 family. In terms of tissue distribution, ubiquitous. Most abundant in heart and placenta, followed by liver and kidney.

It localises to the golgi apparatus membrane. It catalyses the reaction alpha-D-glucosaminyl-[heparan sulfate](n) + 3'-phosphoadenylyl sulfate = 3-sulfo-alpha-D-glucosaminyl-[heparan sulfate](n) + adenosine 3',5'-bisphosphate + H(+). In terms of biological role, sulfotransferase that utilizes 3'-phospho-5'-adenylyl sulfate (PAPS) to catalyze the transfer of a sulfo group to an N-unsubstituted glucosamine linked to a 2-O-sulfo iduronic acid unit on heparan sulfate. Catalyzes the O-sulfation of glucosamine in IdoUA2S-GlcNS and also in IdoUA2S-GlcNH2. The substrate-specific O-sulfation generates an enzyme-modified heparan sulfate which acts as a binding receptor to Herpes simplex virus-1 (HSV-1) and permits its entry. Unlike HS3ST1/3-OST-1, does not convert non-anticoagulant heparan sulfate to anticoagulant heparan sulfate. In Homo sapiens (Human), this protein is Heparan sulfate glucosamine 3-O-sulfotransferase 3A1 (HS3ST3A1).